Here is a 179-residue protein sequence, read N- to C-terminus: NAD(P)H-quinone oxidoreductase subunit I, chloroplastic (179 aa).

4Fe-4S ferredoxin-type domains lie at Gly-55–Arg-84 and Leu-95–Glu-124. The [4Fe-4S] cluster site is built by Cys-64, Cys-67, Cys-70, Cys-74, Cys-104, Cys-107, Cys-110, and Cys-114.

Belongs to the complex I 23 kDa subunit family. As to quaternary structure, NDH is composed of at least 16 different subunits, 5 of which are encoded in the nucleus. Requires [4Fe-4S] cluster as cofactor.

Its subcellular location is the plastid. It localises to the chloroplast thylakoid membrane. The catalysed reaction is a plastoquinone + NADH + (n+1) H(+)(in) = a plastoquinol + NAD(+) + n H(+)(out). The enzyme catalyses a plastoquinone + NADPH + (n+1) H(+)(in) = a plastoquinol + NADP(+) + n H(+)(out). Functionally, NDH shuttles electrons from NAD(P)H:plastoquinone, via FMN and iron-sulfur (Fe-S) centers, to quinones in the photosynthetic chain and possibly in a chloroplast respiratory chain. The immediate electron acceptor for the enzyme in this species is believed to be plastoquinone. Couples the redox reaction to proton translocation, and thus conserves the redox energy in a proton gradient. The protein is NAD(P)H-quinone oxidoreductase subunit I, chloroplastic of Nymphaea alba (White water-lily).